The primary structure comprises 492 residues: Probable cytochrome P450 310a1 (492 aa).

Heme is bound at residue cysteine 428.

Belongs to the cytochrome P450 family. The cofactor is heme.

The protein resides in the endoplasmic reticulum membrane. The protein localises to the microsome membrane. In terms of biological role, may be involved in the metabolism of insect hormones and in the breakdown of synthetic insecticides. This is Probable cytochrome P450 310a1 (Cyp310a1) from Drosophila melanogaster (Fruit fly).